Here is a 188-residue protein sequence, read N- to C-terminus: Viral FLICE protein (188 aa).

2 DED domains span residues 2–74 (ATYE…DLLH) and 93–169 (PYQL…QVQT).

In terms of assembly, interacts with host RIPK1, TRAF2, MAP3K14, IKBKB, and IKBKG. Interacts with host CADM1; this interaction is essential for chronic NF-kappa-B activation.

In terms of biological role, plays a role in the modulation of host signaling pathways by acting as an activator of both the classic and the alternative NF-kappa-B pathways. Thereby, initiates an important range of cellular processes to promote cell survival, proliferation and protection from apoptosis. The polypeptide is Viral FLICE protein (ORF71) (Human herpesvirus 8 type P (isolate GK18) (HHV-8)).